Consider the following 285-residue polypeptide: Nucleotide-binding protein Cphy_0331 (285 aa).

8–15 contributes to the ATP binding site; that stretch reads GMSGAGKS. 59 to 62 contributes to the GTP binding site; it reads DIRS.

The protein belongs to the RapZ-like family.

In terms of biological role, displays ATPase and GTPase activities. This is Nucleotide-binding protein Cphy_0331 from Lachnoclostridium phytofermentans (strain ATCC 700394 / DSM 18823 / ISDg) (Clostridium phytofermentans).